The primary structure comprises 654 residues: Cysteine-rich receptor-like protein kinase 40 (654 aa).

Residues 1 to 27 form the signal peptide; sequence MGKCSALMIFLSSSLLLVLQTLHVVNA. 2 Gnk2-homologous domains span residues 28–131 and 143–250; these read VKCF…NQST and WPSP…LYSF. Residues 28 to 287 are Extracellular-facing; it reads VKCFGNSFNG…VKKGKSIGYG (260 aa). N-linked (GlcNAc...) asparagine glycosylation is found at asparagine 38, asparagine 65, asparagine 128, asparagine 154, asparagine 167, and asparagine 256. Residues 288–308 form a helical membrane-spanning segment; that stretch reads GIIAIVVVFTFINLLVFIGFI. Topologically, residues 309 to 654 are cytoplasmic; the sequence is KVYARRGKLN…DDVFTELSCR (346 aa). One can recognise a Protein kinase domain in the interval 348–619; it reads FSSENTLGQG…VIIWLGSETI (272 aa). ATP contacts are provided by residues 354–362 and lysine 376; that span reads LGQGGFGTV. At tyrosine 421 the chain carries Phosphotyrosine. The active-site Proton acceptor is aspartate 473. At serine 477 the chain carries Phosphoserine. Threonine 513 carries the post-translational modification Phosphothreonine. At tyrosine 521 the chain carries Phosphotyrosine.

Belongs to the protein kinase superfamily. Ser/Thr protein kinase family. CRK subfamily.

It localises to the membrane. The catalysed reaction is L-seryl-[protein] + ATP = O-phospho-L-seryl-[protein] + ADP + H(+). The enzyme catalyses L-threonyl-[protein] + ATP = O-phospho-L-threonyl-[protein] + ADP + H(+). The sequence is that of Cysteine-rich receptor-like protein kinase 40 (CRK40) from Arabidopsis thaliana (Mouse-ear cress).